A 289-amino-acid chain; its full sequence is 2-hydroxy-6-oxononadienedioate/2-hydroxy-6-oxononatrienedioate hydrolase (289 aa).

Histidine 269 acts as the Proton acceptor in catalysis.

This sequence belongs to the AB hydrolase superfamily. MhpC family. In terms of assembly, homodimer.

The enzyme catalyses (2Z,4E)-2-hydroxy-6-oxonona-2,4-dienedioate + H2O = (2Z)-2-hydroxypenta-2,4-dienoate + succinate + H(+). The catalysed reaction is (2Z,4E,7E)-2-hydroxy-6-oxonona-2,4,7-trienedioate + H2O = (2Z)-2-hydroxypenta-2,4-dienoate + fumarate + H(+). Its pathway is aromatic compound metabolism; 3-phenylpropanoate degradation. In terms of biological role, catalyzes the cleavage of the C5-C6 bond of 2-hydroxy-6-oxononadienedioate and 2-hydroxy-6-oxononatrienedioate, a dienol ring fission product of the bacterial meta-cleavage pathway for degradation of phenylpropionic acid. The polypeptide is 2-hydroxy-6-oxononadienedioate/2-hydroxy-6-oxononatrienedioate hydrolase (Cupriavidus pinatubonensis (strain JMP 134 / LMG 1197) (Cupriavidus necator (strain JMP 134))).